A 705-amino-acid chain; its full sequence is Probable iron-sulfur-binding oxidoreductase FadF (705 aa).

Transmembrane regions (helical) follow at residues 4–24, 71–91, 109–129, 146–166, 173–193, and 199–219; these read FLIA…YLFV, IIHV…IDFI, AFTF…GWAF, AGLV…GNGM, HGLS…SGVG, and VIFY…LVYV. 2 4Fe-4S ferredoxin-type domains span residues 268–298 and 360–391; these read QSQL…MLSP and GDVI…VDKI. 8 residues coordinate [4Fe-4S] cluster: Cys277, Cys280, Cys283, Cys287, Cys371, Cys374, Cys377, and Cys381.

[4Fe-4S] cluster serves as cofactor.

It is found in the cell membrane. This Bacillus subtilis (strain 168) protein is Probable iron-sulfur-binding oxidoreductase FadF (fadF).